Here is a 178-residue protein sequence, read N- to C-terminus: Lipid A deacylase PagL (178 aa).

Residues 1–19 (MQFLKKNKPLFGIVTLALA) form the signal peptide. Residues His-154, Ser-156, and Asp-168 each act as charge relay system in the active site.

The protein belongs to the PagL family. In terms of assembly, homodimer.

The protein localises to the cell outer membrane. The catalysed reaction is a 3-(acyloxy)acyl derivative of bacterial toxin + H2O = a 3-hydroxyacyl derivative of bacterial toxin + a fatty acid + H(+). Has lipid A 3-O-deacylase activity. Hydrolyzes the ester bond at the 3 position of lipid A, a bioactive component of lipopolysaccharide (LPS), thereby releasing the primary fatty acyl moiety. This is Lipid A deacylase PagL from Bordetella bronchiseptica (strain ATCC BAA-588 / NCTC 13252 / RB50) (Alcaligenes bronchisepticus).